The chain runs to 129 residues: 3-aminoacrylate deaminase RutC (129 aa).

This sequence belongs to the RutC family.

It carries out the reaction (Z)-3-aminoacrylate + H2O + H(+) = 3-oxopropanoate + NH4(+). Involved in pyrimidine catabolism. Catalyzes the deamination of 3-aminoacrylate to malonic semialdehyde, a reaction that can also occur spontaneously. RutC may facilitate the reaction and modulate the metabolic fitness, rather than catalyzing essential functions. The sequence is that of 3-aminoacrylate deaminase RutC from Rhizobium rhizogenes (strain K84 / ATCC BAA-868) (Agrobacterium radiobacter).